Here is a 94-residue protein sequence, read N- to C-terminus: Probable Fe(2+)-trafficking protein (94 aa).

This sequence belongs to the Fe(2+)-trafficking protein family.

Functionally, could be a mediator in iron transactions between iron acquisition and iron-requiring processes, such as synthesis and/or repair of Fe-S clusters in biosynthetic enzymes. This chain is Probable Fe(2+)-trafficking protein, found in Haemophilus ducreyi (strain 35000HP / ATCC 700724).